Here is a 331-residue protein sequence, read N- to C-terminus: Threonine-phosphate decarboxylase (331 aa).

The residue at position 192 (Lys192) is an N6-(pyridoxal phosphate)lysine.

It belongs to the class-I pyridoxal-phosphate-dependent aminotransferase family. In terms of assembly, homodimer. Requires pyridoxal 5'-phosphate as cofactor.

Its subcellular location is the cytoplasm. It carries out the reaction O-phospho-L-threonine + H(+) = (R)-1-aminopropan-2-yl phosphate + CO2. Its pathway is cofactor biosynthesis; adenosylcobalamin biosynthesis. Its function is as follows. Decarboxylates L-threonine-O-3-phosphate to yield (R)-1-amino-2-propanol O-2-phosphate, the precursor for the linkage between the nucleotide loop and the corrin ring in cobalamin. The protein is Threonine-phosphate decarboxylase (cobC) of Pseudomonas aeruginosa (strain ATCC 15692 / DSM 22644 / CIP 104116 / JCM 14847 / LMG 12228 / 1C / PRS 101 / PAO1).